Here is a 113-residue protein sequence, read N- to C-terminus: MAFFLLLIVSLLTCIGQVCQKQAVVSWQNNSTTKARKTIFWLITAIAMLGFGMLFWLRLLQILPLSIAYPMLSINFIVVTLIGQFIYKETVNVKHWVGIASIMLGIVLMSMQS.

The next 3 helical transmembrane spans lie at 39-59, 62-82, and 91-111; these read IFWL…WLRL, ILPL…VTLI, and VNVK…LMSM. Residues 42 to 111 form the EamA domain; the sequence is LITAIAMLGF…IMLGIVLMSM (70 aa).

Belongs to the ArnE family. In terms of assembly, heterodimer of ArnE and ArnF.

Its subcellular location is the cell inner membrane. It participates in bacterial outer membrane biogenesis; lipopolysaccharide biosynthesis. In terms of biological role, translocates 4-amino-4-deoxy-L-arabinose-phosphoundecaprenol (alpha-L-Ara4N-phosphoundecaprenol) from the cytoplasmic to the periplasmic side of the inner membrane. This chain is Probable 4-amino-4-deoxy-L-arabinose-phosphoundecaprenol flippase subunit ArnE, found in Proteus mirabilis (strain HI4320).